A 342-amino-acid polypeptide reads, in one-letter code: S-adenosylmethionine:tRNA ribosyltransferase-isomerase (342 aa).

This sequence belongs to the QueA family. In terms of assembly, monomer.

It localises to the cytoplasm. It catalyses the reaction 7-aminomethyl-7-carbaguanosine(34) in tRNA + S-adenosyl-L-methionine = epoxyqueuosine(34) in tRNA + adenine + L-methionine + 2 H(+). It functions in the pathway tRNA modification; tRNA-queuosine biosynthesis. Functionally, transfers and isomerizes the ribose moiety from AdoMet to the 7-aminomethyl group of 7-deazaguanine (preQ1-tRNA) to give epoxyqueuosine (oQ-tRNA). The sequence is that of S-adenosylmethionine:tRNA ribosyltransferase-isomerase from Streptococcus pyogenes serotype M49 (strain NZ131).